A 1002-amino-acid chain; its full sequence is Isoleucine--tRNA ligase, mitochondrial (1002 aa).

Positions 94–104 match the 'HIGH' region motif; sequence PYANGELHLGH. Positions 668 to 672 match the 'KMSKS' region motif; the sequence is KMSKS. Lys671 serves as a coordination point for ATP.

The protein belongs to the class-I aminoacyl-tRNA synthetase family.

Its subcellular location is the mitochondrion matrix. The enzyme catalyses tRNA(Ile) + L-isoleucine + ATP = L-isoleucyl-tRNA(Ile) + AMP + diphosphate. This Saccharomyces cerevisiae (strain ATCC 204508 / S288c) (Baker's yeast) protein is Isoleucine--tRNA ligase, mitochondrial (ISM1).